A 681-amino-acid polypeptide reads, in one-letter code: Mating-type protein beta1-1 (681 aa).

Positions 165–227 (DKNEPTSPTP…DARRRIGWNE (63 aa)) form a DNA-binding region, homeobox; TALE-type. Residues 307–318 (LKNDEARRKREA) are compositionally biased toward basic and acidic residues. Disordered regions lie at residues 307–341 (LKND…SPAS), 353–381 (AIDS…SPLC), and 394–466 (SPVK…SDPF). Residues 413–430 (TSAAPSPQPSLLPKLTPT) are compositionally biased toward low complexity.

Belongs to the TALE/M-ATYP homeobox family. May dimerize.

It is found in the nucleus. Functionally, has a major regulatory role in sexual and asexual development. It may bind DNA itself or it may have a role in preventing DNA-binding of another protein. In Coprinopsis cinerea (Inky cap fungus), this protein is Mating-type protein beta1-1.